The chain runs to 309 residues: Probable pyridoxal 5'-phosphate synthase subunit PDX1 (309 aa).

D-ribose 5-phosphate is bound at residue Asp-40. Lys-97 acts as the Schiff-base intermediate with D-ribose 5-phosphate in catalysis. Gly-169 is a binding site for D-ribose 5-phosphate. D-glyceraldehyde 3-phosphate is bound at residue Arg-181. D-ribose 5-phosphate is bound by residues Gly-230 and Gly-251 to Ser-252.

It belongs to the PdxS/SNZ family.

The enzyme catalyses aldehydo-D-ribose 5-phosphate + D-glyceraldehyde 3-phosphate + L-glutamine = pyridoxal 5'-phosphate + L-glutamate + phosphate + 3 H2O + H(+). It participates in cofactor biosynthesis; pyridoxal 5'-phosphate biosynthesis. Its function is as follows. Catalyzes the formation of pyridoxal 5'-phosphate from ribose 5-phosphate (RBP), glyceraldehyde 3-phosphate (G3P) and ammonia. The ammonia is provided by PDX2. Can also use ribulose 5-phosphate and dihydroxyacetone phosphate as substrates, resulting from enzyme-catalyzed isomerization of RBP and G3P, respectively. Also plays an indirect role in resistance to singlet oxygen-generating photosensitizers. The chain is Probable pyridoxal 5'-phosphate synthase subunit PDX1 (PDX1) from Ginkgo biloba (Ginkgo).